The following is a 109-amino-acid chain: ATP-dependent Clp protease adapter protein ClpS 2 (109 aa).

The tract at residues M1–R24 is disordered.

It belongs to the ClpS family. As to quaternary structure, binds to the N-terminal domain of the chaperone ClpA.

Involved in the modulation of the specificity of the ClpAP-mediated ATP-dependent protein degradation. This chain is ATP-dependent Clp protease adapter protein ClpS 2, found in Rhodopseudomonas palustris (strain ATCC BAA-98 / CGA009).